Consider the following 217-residue polypeptide: Small ribosomal subunit protein uS3c (217 aa).

Residues 47 to 119 (VRTHIKSSSN…KLHIAIEKVA (73 aa)) form the KH type-2 domain.

The protein belongs to the universal ribosomal protein uS3 family. As to quaternary structure, part of the 30S ribosomal subunit.

It localises to the plastid. Its subcellular location is the chloroplast. The polypeptide is Small ribosomal subunit protein uS3c (rps3) (Pinus koraiensis (Korean pine)).